The chain runs to 381 residues: Alkanesulfonate monooxygenase (381 aa).

This sequence belongs to the SsuD family. As to quaternary structure, homotetramer.

The catalysed reaction is an alkanesulfonate + FMNH2 + O2 = an aldehyde + FMN + sulfite + H2O + 2 H(+). Functionally, catalyzes the desulfonation of aliphatic sulfonates. This is Alkanesulfonate monooxygenase from Cronobacter sakazakii (strain ATCC BAA-894) (Enterobacter sakazakii).